The primary structure comprises 377 residues: WAT1-related protein At3g56620 (377 aa).

A run of 10 helical transmembrane segments spans residues 13–33 (FAMV…KVVL), 40–60 (YVLV…FALL), 67–87 (PKMT…GPLI), 102–122 (TFAG…SIIC), 142–162 (LVIV…ITFL), 183–203 (VFLL…AATL), 210–230 (LSLS…LTFV), 235–255 (LSAW…AGIM), 274–294 (IFVT…GFLI), and 299–319 (LNLG…TVLW). 2 consecutive EamA domains span residues 22–152 (YAGM…MLMI) and 190–318 (FSWA…CTVL).

It belongs to the drug/metabolite transporter (DMT) superfamily. Plant drug/metabolite exporter (P-DME) (TC 2.A.7.4) family.

The protein localises to the membrane. This Arabidopsis thaliana (Mouse-ear cress) protein is WAT1-related protein At3g56620.